A 120-amino-acid chain; its full sequence is Spermidine export protein MdtJ (120 aa).

The next 4 helical transmembrane spans lie at 1–21 (MFYW…TLSM), 31–51 (TGFI…SFAV), 54–74 (IALG…ITLF), and 81–101 (EALS…IVLI).

The protein belongs to the drug/metabolite transporter (DMT) superfamily. Small multidrug resistance (SMR) (TC 2.A.7.1) family. MdtJ subfamily. As to quaternary structure, forms a complex with MdtI.

Its subcellular location is the cell inner membrane. Catalyzes the excretion of spermidine. The polypeptide is Spermidine export protein MdtJ (Enterobacter sp. (strain 638)).